A 366-amino-acid polypeptide reads, in one-letter code: Putative [LysW]-aminoadipate semialdehyde/glutamate semialdehyde transaminase (366 aa).

Residues 90–91 (GT) and Phe-117 each bind pyridoxal 5'-phosphate. Arg-120 is a binding site for substrate. 202 to 205 (DEVQ) is a pyridoxal 5'-phosphate binding site. The residue at position 230 (Lys-230) is an N6-(pyridoxal phosphate)lysine. Ser-254 contributes to the substrate binding site. Pyridoxal 5'-phosphate is bound at residue Thr-255.

Belongs to the class-III pyridoxal-phosphate-dependent aminotransferase family. LysJ subfamily. In terms of assembly, homodimer. Requires pyridoxal 5'-phosphate as cofactor.

The protein resides in the cytoplasm. The catalysed reaction is [amino-group carrier protein]-C-terminal-gamma-(L-lysyl)-L-glutamate + 2-oxoglutarate = [amino-group carrier protein]-C-terminal-N-(1-carboxy-5-oxopentan-1-yl)-L-glutamine + L-glutamate. The enzyme catalyses [amino-group carrier protein]-C-terminal-gamma-(L-ornithyl)-L-glutamate + 2-oxoglutarate = [amino-group carrier protein]-C-terminal-gamma-(L-glutamyl-5-semialdehyde)-L-glutamate + L-glutamate. It functions in the pathway amino-acid biosynthesis; L-lysine biosynthesis via AAA pathway; L-lysine from L-alpha-aminoadipate (Thermus route): step 4/5. It participates in amino-acid biosynthesis; L-arginine biosynthesis. Its function is as follows. Involved in both the arginine and lysine biosynthetic pathways. This chain is Putative [LysW]-aminoadipate semialdehyde/glutamate semialdehyde transaminase, found in Pyrococcus furiosus (strain ATCC 43587 / DSM 3638 / JCM 8422 / Vc1).